A 59-amino-acid polypeptide reads, in one-letter code: UPF0391 membrane protein Geob_0344 (59 aa).

The next 2 membrane-spanning stretches (helical) occupy residues 4–24 and 33–53; these read WAAIFFIIAIVAAVFGFTGIA and FLFILFLVVALIMLILGITAG.

This sequence belongs to the UPF0391 family.

The protein resides in the cell membrane. The sequence is that of UPF0391 membrane protein Geob_0344 from Geotalea daltonii (strain DSM 22248 / JCM 15807 / FRC-32) (Geobacter daltonii).